The primary structure comprises 261 residues: Pimeloyl-[acyl-carrier protein] methyl ester esterase (261 aa).

Positions 15-243 constitute an AB hydrolase-1 domain; that stretch reads HLVLLHGWGL…AAHAPFISHP (229 aa). Substrate contacts are provided by residues W22, 83 to 84, and 144 to 148; these read SL and FLALQ. The Nucleophile role is filled by S83. Residues D208 and H236 contribute to the active site. H236 contacts substrate.

The protein belongs to the AB hydrolase superfamily. Carboxylesterase BioH family. In terms of assembly, monomer.

It is found in the cytoplasm. The catalysed reaction is 6-carboxyhexanoyl-[ACP] methyl ester + H2O = 6-carboxyhexanoyl-[ACP] + methanol + H(+). The protein operates within cofactor biosynthesis; biotin biosynthesis. The physiological role of BioH is to remove the methyl group introduced by BioC when the pimeloyl moiety is complete. It allows to synthesize pimeloyl-ACP via the fatty acid synthetic pathway through the hydrolysis of the ester bonds of pimeloyl-ACP esters. The protein is Pimeloyl-[acyl-carrier protein] methyl ester esterase of Proteus mirabilis (strain HI4320).